The primary structure comprises 436 residues: Trigger factor (436 aa).

The PPIase FKBP-type domain maps to 161–248; the sequence is TDRVTIDLYG…LKKVEQYRLP (88 aa).

The protein belongs to the FKBP-type PPIase family. Tig subfamily.

It is found in the cytoplasm. It carries out the reaction [protein]-peptidylproline (omega=180) = [protein]-peptidylproline (omega=0). In terms of biological role, involved in protein export. Acts as a chaperone by maintaining the newly synthesized protein in an open conformation. Functions as a peptidyl-prolyl cis-trans isomerase. The sequence is that of Trigger factor from Baumannia cicadellinicola subsp. Homalodisca coagulata.